The primary structure comprises 628 residues: Propionate--CoA ligase (628 aa).

It belongs to the ATP-dependent AMP-binding enzyme family.

It carries out the reaction propanoate + ATP + CoA = propanoyl-CoA + AMP + diphosphate. Its pathway is organic acid metabolism; propanoate degradation. Functionally, catalyzes the synthesis of propionyl-CoA from propionate and CoA. Also converts acetate to acetyl-CoA but with a lower specific activity. This is Propionate--CoA ligase (prpE) from Escherichia coli (strain K12).